The primary structure comprises 239 residues: Large ribosomal subunit protein uL2 (239 aa).

The segment at 200-239 (VNHPHGGKEHHIGRPSTVSRRAPPGRKVGHIAARRTGRRK) is disordered. Positions 222-239 (PPGRKVGHIAARRTGRRK) are enriched in basic residues.

Belongs to the universal ribosomal protein uL2 family. Part of the 50S ribosomal subunit. Forms a bridge to the 30S subunit in the 70S ribosome.

In terms of biological role, one of the primary rRNA binding proteins. Required for association of the 30S and 50S subunits to form the 70S ribosome, for tRNA binding and peptide bond formation. It has been suggested to have peptidyltransferase activity; this is somewhat controversial. Makes several contacts with the 16S rRNA in the 70S ribosome. The sequence is that of Large ribosomal subunit protein uL2 from Thermococcus gammatolerans (strain DSM 15229 / JCM 11827 / EJ3).